Here is a 610-residue protein sequence, read N- to C-terminus: Synaptotagmin-like protein 3 (610 aa).

The region spanning 4–123 (EIDLSALKEL…IKTGEWFYEE (120 aa)) is the RabBD domain. Positions 219–239 (RQCVGQTERRSQSDTAVNVTT) are disordered. 2 consecutive C2 domains span residues 306 to 428 (VTGE…TQSF) and 462 to 603 (RPRK…NLWT).

As to quaternary structure, monomer. Binds NRXN1. Binds RAB27A that has been activated by GTP-binding via its N-terminus.

It is found in the endomembrane system. May act as Rab effector protein and play a role in vesicle trafficking. Binds phospholipids in the presence of calcium ions. This is Synaptotagmin-like protein 3 (SYTL3) from Homo sapiens (Human).